The following is a 526-amino-acid chain: TBC1 domain family member 19 (526 aa).

Positions 251–472 (GSPTALRAEL…LLWDRILGYN (222 aa)) constitute a Rab-GAP TBC domain.

Functionally, may act as a GTPase-activating protein for Rab family protein(s). The chain is TBC1 domain family member 19 (TBC1D19) from Homo sapiens (Human).